Reading from the N-terminus, the 245-residue chain is Dehydrogenase/reductase SDR family member 6 (245 aa).

Residues 16–18 (QGI), D37, and D58 contribute to the NAD(+) site. R144 contributes to the substrate binding site. The Proton acceptor role is filled by Y147. NAD(+) contacts are provided by residues K151 and 180–184 (VDTPS). Substrate-binding residues include R188 and R205.

This sequence belongs to the short-chain dehydrogenases/reductases (SDR) family. Homotetramer.

It is found in the cytoplasm. It catalyses the reaction cis-4-hydroxy-L-proline + NAD(+) = 4-oxo-L-proline + NADH + H(+). The catalysed reaction is (R)-3-hydroxybutanoate + NAD(+) = acetoacetate + NADH + H(+). The protein operates within amino-acid metabolism. It participates in siderophore biosynthesis. In terms of biological role, NAD(H)-dependent dehydrogenase/reductase with a preference for cyclic substrates. Catalyzes stereoselective conversion of 4-oxo-L-proline to cis-4-hydroxy-L-proline, likely a detoxification mechanism for ketoprolines. Mediates the formation of 2,5-dihydroxybenzoate (2,5-DHBA), a siderophore that chelates free cytoplasmic iron, thereby regulating iron transport and homeostasis while protecting cells against free radical-induced oxidative stress. The iron-siderophore complex is imported into mitochondria, providing an iron source for mitochondrial metabolic processes in particular heme synthesis. May act as a 3-hydroxybutyrate dehydrogenase. The polypeptide is Dehydrogenase/reductase SDR family member 6 (bdh2) (Danio rerio (Zebrafish)).